A 184-amino-acid chain; its full sequence is Peptide deformylase (184 aa).

Fe cation contacts are provided by Cys-111 and His-154. Glu-155 is a catalytic residue. His-158 contributes to the Fe cation binding site.

The protein belongs to the polypeptide deformylase family. It depends on Fe(2+) as a cofactor.

It catalyses the reaction N-terminal N-formyl-L-methionyl-[peptide] + H2O = N-terminal L-methionyl-[peptide] + formate. Functionally, removes the formyl group from the N-terminal Met of newly synthesized proteins. Requires at least a dipeptide for an efficient rate of reaction. N-terminal L-methionine is a prerequisite for activity but the enzyme has broad specificity at other positions. In Pediococcus pentosaceus (strain ATCC 25745 / CCUG 21536 / LMG 10740 / 183-1w), this protein is Peptide deformylase.